Consider the following 130-residue polypeptide: Small ribosomal subunit protein uS11c (130 aa).

The protein belongs to the universal ribosomal protein uS11 family. As to quaternary structure, part of the 30S ribosomal subunit.

The protein localises to the plastid. It localises to the chloroplast. This chain is Small ribosomal subunit protein uS11c, found in Marsilea quadrifolia (European water clover).